Consider the following 739-residue polypeptide: MPSPRPVLLRGARAALLLLLPPRLLARPSLLLRRSLSAASCPPISLPAAASRSSMDGAGAEEVLAPLRLAVRQQGDLVRKLKEDKAPQVDVDKAVAELKARKRVLEAKELALQPKDDIVDRAKMEDTLKRRFFYDQAFAIYGGVSGLYDFGPVGCALKNNIIQTWRQHFIQEEQILEIDCTMLTPEPVLKTSGHVDKFADFMVKDVKNGECFRADHLLKAHLQKLMSDKKCSVEKKSEMESVLAQLDNYGQQELADLFVNYNVKSPITGNDLSPPVSFNLMFKTFIGPGGNMPGYLRPETAQGIFLNFKRLLEFNQGKLPFAAAQIGNSFRNEISPRSGLIRVREFTMAEIEHFVDPSEKDHPKFQNVADLHLYLYSAKAQVSGQSARKMRLGDAVEQGVINNTVLGYFIGRIYLYLTKVGISPDKLRFRQHMENEMAHYACDCWDAESKTSYGWIEIVGCADRSCYDLSCHARATKVPLVAEKPLKEPKTVNVVQFEPSKGAIGKAYKKDAKLVMEYLAICDECYITEMEMLLNEKGEFTIETEGKTFQLTKDMINVKRFQKTLYVEEVVPNVIEPSFGLGRIMYTVFEHTFHVREGDEQRTFFSFPAVVAPFKCSVLPLSQNQEFMPFVKELSEALTRHGVSHKVDDSSGSIGRRYARTDEIGVAFGVTIDFDTVNKTPHTATLRDRDSMRQIRAEISELPSIVQDLANGNITWADVEARYPLFEGQETGKKETIEE.

A mitochondrion-targeting transit peptide spans 1-36; sequence MPSPRPVLLRGARAALLLLLPPRLLARPSLLLRRSL. Position 35 is a phosphoserine (Ser-35). The WHEP-TRS domain maps to 63–119; that stretch reads VLAPLRLAVRQQGDLVRKLKEDKAPQVDVDKAVAELKARKRVLEAKELALQPKDDIV. Position 204 is an N6-acetyllysine (Lys-204). Glu-299 lines the glycine pocket. Residues 331–333 and 342–343 each bind ATP; these read RNE and RV. Residue Glu-350 coordinates glycine. A Phosphotyrosine modification is found at Tyr-453. 457–458 contacts ATP; it reads EI. At Lys-501 the chain carries N6-acetyllysine. 576 to 578 is a glycine binding site; the sequence is EPS. ATP is bound at residue Arg-583. Ser-700 carries the phosphoserine modification. The residue at position 736 (Thr-736) is a Phosphothreonine.

It belongs to the class-II aminoacyl-tRNA synthetase family. In terms of assembly, homodimer. In terms of tissue distribution, widely expressed, including in brain and spinal cord. As to expression, expressed in brain, spinal cord, muscle, heart and spleen. Expressed in brain, spinal cord, muscle, heart, spleen and liver.

It localises to the cytoplasm. The protein resides in the cell projection. Its subcellular location is the axon. The protein localises to the secreted. It is found in the extracellular exosome. It localises to the mitochondrion. It catalyses the reaction tRNA(Gly) + glycine + ATP = glycyl-tRNA(Gly) + AMP + diphosphate. It carries out the reaction 2 ATP + H(+) = P(1),P(4)-bis(5'-adenosyl) tetraphosphate + diphosphate. Its activity is regulated as follows. Ap4A synthesis is inhibited by tRNA, via the disruption of the second ATP-binding site by direct blocking and/or by tRNA-induced conformational change. Catalyzes the ATP-dependent ligation of glycine to the 3'-end of its cognate tRNA, via the formation of an aminoacyl-adenylate intermediate (Gly-AMP). Also produces diadenosine tetraphosphate (Ap4A), a universal pleiotropic signaling molecule needed for cell regulation pathways, by direct condensation of 2 ATPs. Thereby, may play a special role in Ap4A homeostasis. This Homo sapiens (Human) protein is Glycine--tRNA ligase.